Consider the following 327-residue polypeptide: Neurogenic differentiation factor 6-A (327 aa).

The disordered stretch occupies residues 17–85 (GANFPRDCVG…KKMTKARVDR (69 aa)). The segment covering 24-46 (CVGDLKGNKQEPFEKEETLSHVM) has biased composition (basic and acidic residues). Positions 47–63 (DDDDSEKDEDEREDGQD) are enriched in acidic residues. Residues 68-80 (PRRRGPRKKKMTK) are compositionally biased toward basic residues. Residues 74-80 (RKKKMTK) carry the Nuclear localization signal motif. One can recognise a bHLH domain in the interval 88-140 (VRRMEANARERNRMHGLNNALDSLRKVVPCYSKTQKLSKIETLRLAKNYIWAL).

Efficient DNA binding requires dimerization with another bHLH protein. As to expression, embryonic olfactory bulbs. In adult, expressed in brain, eye, intestine, muscle, ovary and skin.

Its subcellular location is the nucleus. Its function is as follows. Differentiation factor required for neurogenesis. Acts as an upstream activator of isl1. In Danio rerio (Zebrafish), this protein is Neurogenic differentiation factor 6-A.